The chain runs to 132 residues: UPF0299 membrane protein YohJ (132 aa).

The next 4 membrane-spanning stretches (helical) occupy residues 8–28 (IWQY…GIFI), 31–51 (LLPV…VLLA), 63–83 (GCYL…VGVM), and 93–113 (FGPV…VVSW).

Belongs to the UPF0299 family.

It is found in the cell inner membrane. This is UPF0299 membrane protein YohJ from Escherichia fergusonii (strain ATCC 35469 / DSM 13698 / CCUG 18766 / IAM 14443 / JCM 21226 / LMG 7866 / NBRC 102419 / NCTC 12128 / CDC 0568-73).